The following is a 431-amino-acid chain: MKLALIDGEHYPDVNRWAIEKIKPCCAVFVGGTEKIGSIRDIEKALNIKVYHSPNIFEALSKAISENNITEVIDLSDEPVLTPNLRFRIASYLLKLGITYKGADFEFRAKEWKKIDIPSISIIGTGKRVGKTAIGGFVGRTLKELYKVVIVTMGRGGPEKPEVIRGDLMEITPEFLLKVSEEGKHAASDHFEDALTAGVITVGCRRCGGGLAGFSFFDIIDEGIEIAKSLNPDIIVFEGSGPTFPNVLADGFITITSAIHGTEKIEQYFGPLRIGLADIVVVTMADSVSEEKLKRITQAIREINPEADIHLTRFVPRLIGEVDGKAIIATTNPQSAKKFSEELEKMGIEVVYYTGNLAKRNILKDELAKVNYDDTAIVELKAGAVDVVIRHAFSRGKRVVFLDNEPKNIDGKDLKEAVINLARRIVNDKGN.

The protein belongs to the cyclic 2,3-diphosphoglycerate synthetase family.

The protein localises to the cytoplasm. The enzyme catalyses (2R)-2,3-bisphosphoglycerate + ATP + H(+) = cyclic (2R)-2,3-bisphosphoglycerate + ADP + phosphate. Functionally, catalyzes the formation of cyclic 2,3-diphosphoglycerate (cDPG) by formation of an intramolecular phosphoanhydride bond at the expense of ATP. In Pyrococcus furiosus (strain ATCC 43587 / DSM 3638 / JCM 8422 / Vc1), this protein is Cyclic 2,3-diphosphoglycerate synthetase.